The following is a 370-amino-acid chain: 3-dehydroquinate synthase (370 aa).

Residues 108-112 (GVIGD), 132-133 (TT), K145, and K154 contribute to the NAD(+) site. Zn(2+)-binding residues include E187, H249, and H267.

The protein belongs to the sugar phosphate cyclases superfamily. Dehydroquinate synthase family. Co(2+) is required as a cofactor. Zn(2+) serves as cofactor. The cofactor is NAD(+).

The protein localises to the cytoplasm. The enzyme catalyses 7-phospho-2-dehydro-3-deoxy-D-arabino-heptonate = 3-dehydroquinate + phosphate. The protein operates within metabolic intermediate biosynthesis; chorismate biosynthesis; chorismate from D-erythrose 4-phosphate and phosphoenolpyruvate: step 2/7. Functionally, catalyzes the conversion of 3-deoxy-D-arabino-heptulosonate 7-phosphate (DAHP) to dehydroquinate (DHQ). The protein is 3-dehydroquinate synthase of Cereibacter sphaeroides (strain ATCC 17029 / ATH 2.4.9) (Rhodobacter sphaeroides).